A 229-amino-acid polypeptide reads, in one-letter code: MSQRIKTAAVDIVHITSGRIASGMLSHEPIWYRAMAANMPTTVYQHKPHFEKLARIAQRESEKLNEFIKTRSKPVRVRTRHLYEPVHLKFMEDEIREIFYKQHPWELARPKLIVENSGDDHVTQDWSKMYQANKKLDGESVVQRTIYLLGEKKTHDQKALLEAYDKARFEFYKLRMAEDVQNVTAAEEADMFGACFSTSSVERNLFHEQKRIEDWKEKAVEMTLDMGAK.

It belongs to the mitochondrion-specific ribosomal protein mS23 family. In terms of assembly, component of the mitochondrial small ribosomal subunit.

It localises to the mitochondrion. This chain is Small ribosomal subunit protein mS23 (RSM25), found in Yarrowia lipolytica (strain CLIB 122 / E 150) (Yeast).